The primary structure comprises 161 residues: Abscisic acid receptor PYL11 (161 aa).

Residues 3-154 (TSQKYHTCGS…NLKSLAKLSE (152 aa)) form an START-like region. Residues lysine 39, 68-73 (AEFSRE), 95-101 (RLVNYRS), and glutamate 119 contribute to the abscisate site. The Gate loop motif lies at 64–68 (SGLPA). Residues 94–96 (HRL) carry the Latch loop motif.

Belongs to the PYR/PYL/RCAR abscisic acid intracellular receptor family. As to quaternary structure, homodimer. Binds ABA on one subunit only. Interacts with PP2Cs. Binds to CARs protein in an ABA-independent manner, both at the plasma membrane and in the nucleus. Interacts with I-2 and TOPP1.

The protein resides in the cytoplasm. The protein localises to the nucleus. Its subcellular location is the cell membrane. In terms of biological role, receptor for abscisic acid (ABA) required for ABA-mediated responses such as stomatal closure and germination inhibition. Inhibits the activity of group-A protein phosphatases type 2C (PP2Cs) when activated by ABA. Suppresses the phosphatase activity of TOPP1 in a dose-dependent manner in vitro. In Arabidopsis thaliana (Mouse-ear cress), this protein is Abscisic acid receptor PYL11 (PYL11).